The primary structure comprises 233 residues: Hydroxyacylglutathione hydrolase (233 aa).

H52, H54, D56, H57, H108, D125, and H163 together coordinate Zn(2+).

It belongs to the metallo-beta-lactamase superfamily. Glyoxalase II family. Monomer. Zn(2+) is required as a cofactor.

The catalysed reaction is an S-(2-hydroxyacyl)glutathione + H2O = a 2-hydroxy carboxylate + glutathione + H(+). It functions in the pathway secondary metabolite metabolism; methylglyoxal degradation; (R)-lactate from methylglyoxal: step 2/2. Thiolesterase that catalyzes the hydrolysis of S-D-lactoyl-glutathione to form glutathione and D-lactic acid. The polypeptide is Hydroxyacylglutathione hydrolase (Histophilus somni (strain 2336) (Haemophilus somnus)).